The sequence spans 140 residues: Endoribonuclease YbeY (140 aa).

Zn(2+)-binding residues include His-105, His-109, and Asp-115.

It belongs to the endoribonuclease YbeY family. Zn(2+) serves as cofactor.

The protein resides in the cytoplasm. In terms of biological role, single strand-specific metallo-endoribonuclease involved in late-stage 70S ribosome quality control and in maturation of the 3' terminus of the 16S rRNA. This Flavobacterium psychrophilum (strain ATCC 49511 / DSM 21280 / CIP 103535 / JIP02/86) protein is Endoribonuclease YbeY.